The chain runs to 1050 residues: Self-sufficient cytochrome P450 monooxygenase CYP505E5 (1050 aa).

A heme-binding site is contributed by Cys-405. Residues 467-491 form a disordered region; sequence RRSMLVARDGSSGESSNHLAEARGD. The 142-residue stretch at 500 to 641 folds into the Flavodoxin-like domain; sequence VSFFYGSNSG…DLEAWEETSL (142 aa). Residues 506 to 510 and 585 to 617 each bind FMN; these read SNSGT and VFGCGHHDWTQTFYRIPILIDDLMHKAGATRLA. The region spanning 679-907 is the FAD-binding FR-type domain; it reads KGLIEAKVTA…RPAKESFHLP (229 aa).

The protein in the N-terminal section; belongs to the cytochrome P450 family. It depends on FAD as a cofactor. FMN is required as a cofactor. The cofactor is heme.

The enzyme catalyses 2 oxidized [cytochrome P450] + NADPH = 2 reduced [cytochrome P450] + NADP(+) + H(+). It catalyses the reaction an organic molecule + reduced [NADPH--hemoprotein reductase] + O2 = an alcohol + oxidized [NADPH--hemoprotein reductase] + H2O + H(+). The catalysed reaction is dodecanoate + reduced [NADPH--hemoprotein reductase] + O2 = 5-hydroxydodecanoate + oxidized [NADPH--hemoprotein reductase] + H2O + H(+). It carries out the reaction tetradecanoate + reduced [NADPH--hemoprotein reductase] + O2 = 7-hydroxytetradecanoate + oxidized [NADPH--hemoprotein reductase] + H2O + H(+). The enzyme catalyses dodecan-1-ol + reduced [NADPH--hemoprotein reductase] + O2 = 1,5-dodecanediol + oxidized [NADPH--hemoprotein reductase] + H2O + H(+). It catalyses the reaction dodecan-1-ol + reduced [NADPH--hemoprotein reductase] + O2 = 1,4-dodecanediol + oxidized [NADPH--hemoprotein reductase] + H2O + H(+). The catalysed reaction is dodecan-1-ol + reduced [NADPH--hemoprotein reductase] + O2 = 1,6-dodecanediol + oxidized [NADPH--hemoprotein reductase] + H2O + H(+). Functionally, self-sufficient cytochrome P450 monooxygenase that catalyzes the regioselective in-chain hydroxylation of alkanes, fatty alcohols, and fatty acids at the omega-7 position. Performs hydroxylation of C10-C16 n-alkanes and C12 and C14 fatty alcohols; and thereby enables the one step biocatalytic synthesis of rare alcohols such as 5-dodecanol and 7-tetradecanol. Converts 1-dodecanol into 1,5-dodecanediol as major product with very little sub-terminally hydroxylated products with the 1,4-dodecanediol and 1,6-dodecanediol more abundant. Converts dodecanoic acid to 5-hydroxydodecanoic acid which can be further converted into delta-dodecalactone by lactonization of the 5-hydroxy acid at low pH. Also gives sub-terminal hydroxylation of dodecanoic acid with 9-hydroxydodecanoic acid being the second most abundant product. The polypeptide is Self-sufficient cytochrome P450 monooxygenase CYP505E5 (Aspergillus niger).